Here is a 776-residue protein sequence, read N- to C-terminus: Calcium-independent phospholipase A2-gamma (776 aa).

Composition is skewed to basic and acidic residues over residues 226–238 (RQLQDKPCLEESK) and 307–331 (LKSDPKSQPEEEEEPSKTDEPICKD). 2 disordered regions span residues 226 to 274 (RQLQ…EALP) and 306 to 331 (KLKSDPKSQPEEEEEPSKTDEPICKD). The region spanning 439–634 (LAIDGGGTRG…LLNNPSALAL (196 aa)) is the PNPLA domain. The short motif at 443–448 (GGGTRG) is the GXGXXG element. A helical membrane pass occupies residues 469-489 (LFDYICGVSTGAILAFMLGLF). The GXSXG signature appears at 475 to 479 (GVSTG). Ser477 (nucleophile) is an active-site residue. The Proton acceptor role is filled by Asp621. Residues 621 to 623 (DGG) carry the DGA/G motif. N6-succinyllysine is present on Lys730.

It localises to the endoplasmic reticulum membrane. Its subcellular location is the microsome membrane. It is found in the mitochondrion membrane. The protein localises to the peroxisome membrane. The catalysed reaction is a 1,2-diacyl-sn-glycero-3-phosphocholine + H2O = a 1-acyl-sn-glycero-3-phosphocholine + a fatty acid + H(+). It carries out the reaction a 1,2-diacyl-sn-glycero-3-phosphocholine + H2O = a 2-acyl-sn-glycero-3-phosphocholine + a fatty acid + H(+). The enzyme catalyses a 1,2-diacyl-sn-glycero-3-phosphoethanolamine + H2O = a 1-acyl-sn-glycero-3-phosphoethanolamine + a fatty acid + H(+). It catalyses the reaction a 1-O-(1Z-alkenyl)-2-acyl-sn-glycero-3-phosphocholine + H2O = a 1-O-(1Z-alkenyl)-sn-glycero-3-phosphocholine + a fatty acid + H(+). The catalysed reaction is a 1-acyl-sn-glycero-3-phosphocholine + H2O = sn-glycerol 3-phosphocholine + a fatty acid + H(+). It carries out the reaction 1-acyl-2-(9Z,12Z)-octadecadienoyl-sn-glycero-3-phosphocholine + H2O = a 1-acyl-sn-glycero-3-phosphocholine + (9Z,12Z)-octadecadienoate + H(+). The enzyme catalyses 1-acyl-2-(5Z,8Z,11Z,14Z-eicosatetraenoyl)-sn-glycero-3-phosphocholine + H2O = a 1-acyl-sn-glycero-3-phosphocholine + (5Z,8Z,11Z,14Z)-eicosatetraenoate + H(+). It catalyses the reaction 1-hexadecanoyl-2-(5Z,8Z,11Z,14Z-eicosatetraenoyl)-sn-glycero-3-phosphocholine + H2O = 1-hexadecanoyl-sn-glycero-3-phosphocholine + (5Z,8Z,11Z,14Z)-eicosatetraenoate + H(+). The catalysed reaction is 1-octadecanoyl-2-(9Z-octadecenoyl)-sn-glycero-3-phosphocholine + H2O = 1-octadecanoyl-sn-glycero-3-phosphocholine + (9Z)-octadecenoate + H(+). It carries out the reaction 1-hexadecanoyl-2-(9Z-octadecenoyl)-sn-glycero-3-phosphocholine + H2O = 1-hexadecanoyl-sn-glycero-3-phosphocholine + (9Z)-octadecenoate + H(+). The enzyme catalyses 1-hexadecanoyl-2-(9Z,12Z-octadecadienoyl)-sn-glycero-3-phosphocholine + H2O = (9Z,12Z)-octadecadienoate + 1-hexadecanoyl-sn-glycero-3-phosphocholine + H(+). It catalyses the reaction 1-acyl-2-(9Z,12Z)-octadecadienoyl-sn-glycero-3-phosphoethanolamine + H2O = a 1-acyl-sn-glycero-3-phosphoethanolamine + (9Z,12Z)-octadecadienoate + H(+). The catalysed reaction is 1-acyl-2-(5Z,8Z,11Z,14Z)-eicosatetraenoyl-sn-glycero-3-phosphoethanolamine + H2O = a 1-acyl-sn-glycero-3-phosphoethanolamine + (5Z,8Z,11Z,14Z)-eicosatetraenoate + H(+). It carries out the reaction 1-hexadecanoyl-2-(5Z,8Z,11Z,14Z-eicosatetraenoyl)-sn-glycero-3-phosphoethanolamine + H2O = 1-hexadecanoyl-sn-glycero-3-phosphoethanolamine + (5Z,8Z,11Z,14Z)-eicosatetraenoate + H(+). The enzyme catalyses 1-hexadecanoyl-2-(5Z,8Z,11Z,14Z-eicosatetraenoyl)-sn-glycero-3-phosphocholine + H2O = 2-(5Z,8Z,11Z,14Z)-eicosatetraenoyl-sn-glycero-3-phosphocholine + hexadecanoate + H(+). It catalyses the reaction 1-octadecanoyl-2-(9Z-octadecenoyl)-sn-glycero-3-phosphocholine + H2O = 2-(9Z-octadecenoyl)-sn-glycero-3-phosphocholine + octadecanoate + H(+). The catalysed reaction is 1-hexadecanoyl-2-(4Z,7Z,10Z,13Z,16Z,19Z-docosahexaenoyl)-sn-glycero-3-phosphocholine + H2O = 2-(4Z,7Z,10Z,13Z,16Z,19Z-docosahexaenoyl)-sn-glycero-3-phosphocholine + hexadecanoate + H(+). It carries out the reaction 1-O-(1Z)-hexadecenyl-2 (5Z,8Z,11Z,14Z)-eicosatetraenoyl-sn-glycero-3-phosphocholine + H2O = 1-(1Z-hexadecenyl)-sn-glycero-3-phosphocholine + (5Z,8Z,11Z,14Z)-eicosatetraenoate + H(+). The enzyme catalyses 1-O-(1Z-hexadecenyl)-2-(9Z-octadecenoyl)-sn-glycero-3-phosphocholine + H2O = 1-(1Z-hexadecenyl)-sn-glycero-3-phosphocholine + (9Z)-octadecenoate + H(+). It catalyses the reaction 1-hexadecanoyl-sn-glycero-3-phosphocholine + H2O = sn-glycerol 3-phosphocholine + hexadecanoate + H(+). The catalysed reaction is 1',3'-bis-[1,2-di-(9Z,12Z-octadecadienoyl)-sn-glycero-3-phospho]-glycerol + H2O = 1'-[1,2-di-(9Z,12Z-octadecadienoyl)-sn-glycero-3-phospho]-3'-[1-(9Z,12Z-octadecadienoyl)-sn-glycero-3-phospho]-glycerol + (9Z,12Z)-octadecadienoate + H(+). It carries out the reaction 1'-[1-acyl-2-(9-hydroxy-(10E,12Z)-octadecadienoyl)-sn-glycero-3-phospho]-3'-[1,2-diacyl-sn-glycero-3-phospho]-glycerol + H2O = 9-hydroxy-(10E,12Z)-octadecadienoate + 1'-[1,2-diacyl-sn-glycero-3-phospho],3'-[1-acyl-sn-glycero-3-phospho]-glycerol + H(+). It participates in phospholipid metabolism. With respect to regulation, calcium-independent phospholipase. Functionally, calcium-independent and membrane-bound phospholipase, that catalyzes the esterolytic cleavage of fatty acids from glycerophospholipids to yield free fatty acids and lysophospholipids, hence regulating membrane physical properties and the release of lipid second messengers and growth factors. Hydrolyzes phosphatidylethanolamine, phosphatidylcholine and probably phosphatidylinositol with a possible preference for the former. Has also a broad substrate specificity in terms of fatty acid moieties, hydrolyzing saturated and mono-unsaturated fatty acids at nearly equal rates from either the sn-1 or sn-2 position in diacyl phosphatidylcholine. However, has a weak activity toward polyunsaturated fatty acids at the sn-2 position, and thereby favors the production of 2-arachidonoyl lysophosphatidylcholine, a key branch point metabolite in eicosanoid signaling. On the other hand, can produce arachidonic acid from the sn-1 position of diacyl phospholipid and from the sn-2 position of arachidonate-containing plasmalogen substrates. Therefore, plays an important role in the mobilization of arachidonic acid in response to cellular stimuli and the generation of lipid second messengers. Can also hydrolyze lysophosphatidylcholine. In the mitochondrial compartment, catalyzes the hydrolysis and release of oxidized aliphatic chains from cardiolipin and integrates mitochondrial bioenergetics and signaling. It is essential for maintaining efficient bioenergetic mitochondrial function through tailoring mitochondrial membrane lipid metabolism and composition. In Rattus norvegicus (Rat), this protein is Calcium-independent phospholipase A2-gamma.